Consider the following 614-residue polypeptide: Inactive leucine-rich repeat receptor-like serine/threonine-protein kinase At5g24100 (614 aa).

Positions methionine 1–alanine 21 are cleaved as a signal peptide. The Extracellular segment spans residues leucine 22–alanine 251. The N-linked (GlcNAc...) asparagine glycan is linked to asparagine 53. LRR repeat units lie at residues glycine 71 to arginine 95, leucine 96 to leucine 120, lysine 121 to asparagine 146, threonine 148 to asparagine 167, leucine 168 to leucine 190, and proline 191 to phenylalanine 214. Asparagine 146, asparagine 158, and asparagine 167 each carry an N-linked (GlcNAc...) asparagine glycan. N-linked (GlcNAc...) asparagine glycosylation is found at asparagine 197 and asparagine 202. A helical transmembrane segment spans residues isoleucine 252–isoleucine 272. The Cytoplasmic segment spans residues valine 273 to aspartate 614. A Protein kinase domain is found at isoleucine 341 to isoleucine 611. Serine 343 carries the phosphoserine modification. ATP is bound by residues leucine 347 to threonine 355 and lysine 369. Serine 420 bears the Phosphoserine mark. Threonine 441, threonine 514, and threonine 591 each carry phosphothreonine. The LRR 7 repeat unit spans residues alanine 578–methionine 601.

Belongs to the protein kinase superfamily. Ser/Thr protein kinase family.

Its subcellular location is the cell membrane. The chain is Inactive leucine-rich repeat receptor-like serine/threonine-protein kinase At5g24100 from Arabidopsis thaliana (Mouse-ear cress).